Consider the following 227-residue polypeptide: PKHD-type hydroxylase Patl_2273 (227 aa).

The 101-residue stretch at 78–178 (KIYPPKFNRY…RTASFFWIES (101 aa)) folds into the Fe2OG dioxygenase domain. Fe cation is bound by residues histidine 96, aspartate 98, and histidine 159. Position 169 (arginine 169) interacts with 2-oxoglutarate.

Fe(2+) serves as cofactor. It depends on L-ascorbate as a cofactor.

This chain is PKHD-type hydroxylase Patl_2273, found in Pseudoalteromonas atlantica (strain T6c / ATCC BAA-1087).